The following is a 144-amino-acid chain: Peroxisome assembly protein 22 (144 aa).

Residues tyrosine 13–alanine 35 traverse the membrane as a helical segment.

The protein belongs to the peroxin-22 family.

The protein localises to the peroxisome membrane. Functionally, involved in peroxisome biogenesis. The chain is Peroxisome assembly protein 22 (PEX22) from Eremothecium gossypii (strain ATCC 10895 / CBS 109.51 / FGSC 9923 / NRRL Y-1056) (Yeast).